A 141-amino-acid chain; its full sequence is Large ribosomal subunit protein uL11 (141 aa).

The protein belongs to the universal ribosomal protein uL11 family. Part of the ribosomal stalk of the 50S ribosomal subunit. Interacts with L10 and the large rRNA to form the base of the stalk. L10 forms an elongated spine to which L12 dimers bind in a sequential fashion forming a multimeric L10(L12)X complex. In terms of processing, one or more lysine residues are methylated.

Its function is as follows. Forms part of the ribosomal stalk which helps the ribosome interact with GTP-bound translation factors. The chain is Large ribosomal subunit protein uL11 from Oceanobacillus iheyensis (strain DSM 14371 / CIP 107618 / JCM 11309 / KCTC 3954 / HTE831).